The chain runs to 131 residues: Ribosome-binding factor A (131 aa).

This sequence belongs to the RbfA family. In terms of assembly, monomer. Binds 30S ribosomal subunits, but not 50S ribosomal subunits or 70S ribosomes.

It is found in the cytoplasm. Its function is as follows. One of several proteins that assist in the late maturation steps of the functional core of the 30S ribosomal subunit. Associates with free 30S ribosomal subunits (but not with 30S subunits that are part of 70S ribosomes or polysomes). Required for efficient processing of 16S rRNA. May interact with the 5'-terminal helix region of 16S rRNA. The chain is Ribosome-binding factor A from Vibrio vulnificus (strain CMCP6).